Reading from the N-terminus, the 238-residue chain is MEWLSEIRKLRKNVPVGIQVARRLLERTGGDVDEAIKLFHIDQINILTAKADVTHQEAENVLLATNYDIAEALRRIDEQRYTLTELILRKNKDAGDALNNIALAIEYEWDLKRKFWFGFADIQLLPPVLQTFMLVYEWHEYVGWEGMECGIFFESDHTHQQLQALGLLELAQKMVTARIRYDELKDKAENFHEITEDDIFKMLIIHCDQLAREVDSILLQFVKDNIDVFPCRHNRHEL.

This is an uncharacterized protein from Escherichia coli (strain K12).